Here is a 331-residue protein sequence, read N- to C-terminus: UPF0194 membrane protein YbhG (331 aa).

Residues 1–19 (MKKPVVIGLAIAAIVTVIA) form the signal peptide. Positions 107 to 208 (EEIAQAAAAV…LDLQDTTLIA (102 aa)) form a coiled coil.

This sequence belongs to the UPF0194 family.

The protein resides in the periplasm. This Salmonella arizonae (strain ATCC BAA-731 / CDC346-86 / RSK2980) protein is UPF0194 membrane protein YbhG.